The following is a 550-amino-acid chain: Transcription factor 7-like 1-D (550 aa).

Residues 1-61 form an interaction with CTNNB1-A region; the sequence is MPQLNSGXGD…SENHSSDSDS (61 aa). Disordered regions lie at residues 1 to 77, 182 to 212, 390 to 473, and 488 to 514; these read MPQL…EKPR, GTPP…PYYP, WSAR…SLTT, and ASKS…SRPI. Composition is skewed to basic and acidic residues over residues 17 to 32 and 52 to 77; these read ELIR…EKSP and SENH…EKPR. Residues 109-311 are interaction with AES and TLE4-A; that stretch reads LGGITCPMVP…SPNLSMKSNV (203 aa). The HMG box DNA-binding region spans 323-391; sequence IKKPLNAFML…LHSQLYPSWS (69 aa). Basic and acidic residues predominate over residues 406–415; that stretch reads KQSPEMENYT. The tract at residues 407-550 is interaction with CTBP-B; it reads QSPEMENYTK…PLPLVARSSD (144 aa). A compositionally biased stretch (low complexity) spans 444-455; the sequence is SPATPSAALASP.

Belongs to the TCF/LEF family. Interacts with csnk1e, ctnnb1-A, ctbp-B, dact1-A and gsk3b. May interact with ase and tle4-A. Post-translationally, phosphorylated. Phosphorylation by csnk1e promotes binding to ctnnb1-A while phosphorylation by gsk3b may reverse this effect.

It localises to the nucleus. Functionally, participates in the Wnt signaling pathway. Binds to DNA and acts as a repressor in the absence of ctnnb1-A and possibly ctnnb1-B, and as an activator in the presence of these proteins. Required early in development for the establishment of the dorsal body axis in response to maternal Wnt signaling. The chain is Transcription factor 7-like 1-D (tcf7l1-d) from Xenopus laevis (African clawed frog).